Here is a 902-residue protein sequence, read N- to C-terminus: HTH-type transcriptional regulator MalT (902 aa).

Residue 39–46 coordinates ATP; the sequence is SPAGYGKT. The region spanning 832–897 is the HTH luxR-type domain; that stretch reads ELVRTSPLTQ…EAIVTAENLL (66 aa). Residues 856–875 constitute a DNA-binding region (H-T-H motif); sequence NEQIAQELDVAGTTIKTHIR.

It belongs to the MalT family. In terms of assembly, monomer in solution. Oligomerizes to an active state in the presence of the positive effectors ATP and maltotriose.

Its activity is regulated as follows. Activated by ATP and maltotriose, which are both required for DNA binding. Its function is as follows. Positively regulates the transcription of the maltose regulon whose gene products are responsible for uptake and catabolism of malto-oligosaccharides. Specifically binds to the promoter region of its target genes, recognizing a short DNA motif called the MalT box. This is HTH-type transcriptional regulator MalT from Vibrio campbellii (strain ATCC BAA-1116).